A 131-amino-acid polypeptide reads, in one-letter code: Large ribosomal subunit protein bL17 (131 aa).

This sequence belongs to the bacterial ribosomal protein bL17 family. As to quaternary structure, part of the 50S ribosomal subunit. Contacts protein L32.

In Herminiimonas arsenicoxydans, this protein is Large ribosomal subunit protein bL17.